The sequence spans 314 residues: tRNA dimethylallyltransferase (314 aa).

Residue 36–43 (GPTASGKT) participates in ATP binding. 38–43 (TASGKT) lines the substrate pocket. The interval 61–64 (DSVQ) is interaction with substrate tRNA.

This sequence belongs to the IPP transferase family. Monomer. Mg(2+) serves as cofactor.

It catalyses the reaction adenosine(37) in tRNA + dimethylallyl diphosphate = N(6)-dimethylallyladenosine(37) in tRNA + diphosphate. Its function is as follows. Catalyzes the transfer of a dimethylallyl group onto the adenine at position 37 in tRNAs that read codons beginning with uridine, leading to the formation of N6-(dimethylallyl)adenosine (i(6)A). This is tRNA dimethylallyltransferase from Sorangium cellulosum (strain So ce56) (Polyangium cellulosum (strain So ce56)).